Reading from the N-terminus, the 273-residue chain is MAFLAGPRLLDWASSPPHLQFNKFVLTGYRPASSGSGCLRSLFYLHNELGNIYTHGLALLGFLVLVPMTMPWGQLGKDGWLGGTHCVACLAPPAGSVLYHLFMCHQGGSAVYARLLALDMCGVCLVNTLGALPIIHCTLACRPWLRPAALVGYTVLSGVAGWRALTAPSTSARLRAFGWQAAARLLVFGARGVGLGSGAPGSLPCYLRMDALALLGGLVNVARLPERWGPGRFDYWGNSHQIMHLLSVGSILQLHAGVVPDLLWAAHHACPRD.

The next 6 membrane-spanning stretches (helical) occupy residues 52-72, 79-99, 115-135, 147-167, 185-205, and 245-265; these read IYTH…TMPW, GWLG…SVLY, LLAL…LPII, PAAL…ALTA, LLVF…SLPC, and LLSV…LLWA.

Belongs to the ADIPOR family. In terms of assembly, interacts with CERS2 and CERS5; the interaction regulates CERS2 and CERS5 stabilities and activities and is inhibited in presence of ceramides. In terms of tissue distribution, relatively widely expressed in a range of tissues. Expressed in subcutaneous white adipose tissue.

The protein localises to the golgi apparatus membrane. Plays a role in maintaining adipose tissue function through the regulation of ceramide levels. Mediates the stability of ceramide synthetases, CERS2 and CERS5, and their activities. This Homo sapiens (Human) protein is Progestin and adipoQ receptor family member 4.